An 827-amino-acid chain; its full sequence is Periplasmic nitrate reductase (827 aa).

The segment at residues 1-32 is a signal peptide (tat-type signal); that stretch reads MNLSRRDFMKANAALAAASVAGLIIPVKNVNA. In terms of domain architecture, 4Fe-4S Mo/W bis-MGD-type spans 37-93; that stretch reads ITWDKAVCRFCGTGCAVLVGTKDGRVVASQGDPDAEVNRGLNCIKGYFLPKIMYGKD. C44, C47, C51, and C79 together coordinate [4Fe-4S] cluster. Mo-bis(molybdopterin guanine dinucleotide) is bound by residues K81, Q148, N173, C177, 210 to 217, 242 to 246, 261 to 263, M372, Q376, N482, 508 to 509, K531, D558, and 717 to 726; these read WGSNMAEM, STFEH, QSD, SD, and TGRILEHWHT. F793 is a substrate binding site. Residues N801 and K818 each coordinate Mo-bis(molybdopterin guanine dinucleotide).

This sequence belongs to the prokaryotic molybdopterin-containing oxidoreductase family. NasA/NapA/NarB subfamily. In terms of assembly, component of the periplasmic nitrate reductase NapAB complex composed of NapA and NapB. Requires [4Fe-4S] cluster as cofactor. The cofactor is Mo-bis(molybdopterin guanine dinucleotide). In terms of processing, predicted to be exported by the Tat system. The position of the signal peptide cleavage has not been experimentally proven.

It localises to the periplasm. The catalysed reaction is 2 Fe(II)-[cytochrome] + nitrate + 2 H(+) = 2 Fe(III)-[cytochrome] + nitrite + H2O. Functionally, catalytic subunit of the periplasmic nitrate reductase complex NapAB. Receives electrons from NapB and catalyzes the reduction of nitrate to nitrite. In Histophilus somni (strain 129Pt) (Haemophilus somnus), this protein is Periplasmic nitrate reductase.